A 373-amino-acid polypeptide reads, in one-letter code: DNA replication and repair protein RecF (373 aa).

ATP is bound at residue G30–T37.

The protein belongs to the RecF family.

It is found in the cytoplasm. Functionally, the RecF protein is involved in DNA metabolism; it is required for DNA replication and normal SOS inducibility. RecF binds preferentially to single-stranded, linear DNA. It also seems to bind ATP. The protein is DNA replication and repair protein RecF of Marinobacter nauticus (strain ATCC 700491 / DSM 11845 / VT8) (Marinobacter aquaeolei).